The primary structure comprises 1723 residues: MADEERVPAPYFQDDEEGGASDEGEGVDLIKSHGNLVGSGGEDSSDEEEDDDPEEARRVAEGFIAEDDEEEEEDSEARRDRRRRRKKKRKQNEQDFEVDEDDLELLAENTGQPRRKEAGRLKRFRRGSASPPADDEAAARQRTLDQIFEDDDEDEDDIRSGRRGVNYDDDDEDLPSVGQALRAGVARKQREVVGAYEDDGLDDFIEEDEDDEEMQGLDEEEREARRQQRREEKRKARLSGSAADPAKAGIDHEAWDEIHEIFGNGEDYFWALEDEEEDAFDEEKKNKMEYKDIFEPAQIAERMLTEDDERIKRIDIPERLQLACPGEEGLKLLERKLTDTELFEAAKWASTRISQRTAAEFLDEAGLFHRQRSEFINAVQLMLSYMLNDLLEVPFLFQHRFDELEHLTFDEVERQYRSIDLLTRRELYTLSGLGLKFKTLLVRKDQLRATFNKIHVDVKTEPIQDDELDGGLDAMPADESRAARVESSQRQRAIFEDMLAQAASLEEISDITEYLTLRYGQQMRDAQALTSNGTDQAASDLQGLTLTSDPLVSATPAFKKPSLVGQYERNKKTVLAELAKKFGITSDELASNVTSHTRQYSPRDPEESPFKFAEQFTGSAWGAHSPEIALAKAKMMLSQEIGKDPILKREMRQLFKDAAEINIEPTERGMTVIDDQHPYANFKFIANKPARLVPQNPSQYLQMLQAEDELLIKLDIDLKDVVLTRFEARLYNNYASEGVGELSNAWNEQRRDVIREALKTHLVPNGRIWLKEFLREESRETLLRHVDVLMTKRVQEGPFMSKSMMARNRDPKIEEEDRIPRVLAVSHGGGDPRKDVVQAVYLDERGRFREHATFDDLRPLSARQMQERELELERTRGKAEFVDHRADFVKLLKQRRPDIVVVSGWSVRTAELKRHVQELADTAHQEICDADRLHSDLERDQAVIDVVTCHDDVARIYQHSSRAAEEFPELSELGRYCLALARYAQSPVNEFAALGSDLTAVILDPNQRLLPQDRLRLHFERCIGAVVNENGVEINQAMTSTYLQTMLPFVAGLGPRKAHALVNAISTKLEGTLINRTLLISRNILTFQVFQNCASFLRIEQDMLLEADEDDVPDVLDSTRIHPEDYDFPRKMAADALNKHEEDLEGEHPSLPCKELMEDADPADKLNTLDLDNYATMLFERKGERKRATLHSCRTELIKPYDDLREKQSEPSLEEMLTMFTGETSKTLAEGFVVSVEVTRVQEGNRMQEGHIKCRLDSGIEGTIEAEHAVEHYTPGSVRLRDLVRPQQTLDALVRKIDYKMCTVQLSISPWELQHRATHQGKTPIDIKFYDRRKADQWNEHAAAKAKLRIQARRQNRVIDHPNYHNFNYKAAVTFLRSQPRGTVVVRPSSKGDDHLAVTWKVDDDVYQNIDVTELDKESEYSLGRVLRIEGMGSYSDLDELIVNHVKPMVHMVEMMMNHEKYKGADEEDLHRFLTNWSLANPSRSVYAFGLNKDRPGYFNLSFKANRDAAIQTWPVKVLPNAFKLGPADQLADVAALCNAFKTQYTTQASMARGAKTPYGGGRTPAPGMGGATPLGGRTPYGGVRNGMAGSATPGQGVAGGYTTPMINVASATPNPYGGAYGRNGAAGGYGAPAAGGPPGRPPSMPGAPPMMPPGMASGGGAPSYAPPFAGAGEPGPPPARPPVPHGMHPDRFAQAEYGGASQQSYGENSGGAGGYGGGYRGY.

Positions 1 to 247 are disordered; the sequence is MADEERVPAP…LSGSAADPAK (247 aa). Acidic residues-rich tracts occupy residues 13–26, 43–54, and 64–75; these read QDDEEGGASDEGEG, DSSDEEEDDDPE, and IAEDDEEEEEDS. A compositionally biased stretch (basic residues) spans 80 to 90; sequence DRRRRRKKKRK. 3 stretches are compositionally biased toward acidic residues: residues 94–105, 147–157, and 196–221; these read QDFEVDEDDLEL, IFEDDDEDEDD, and YEDDGLDDFIEEDEDDEEMQGLDEEE. The span at 222 to 234 shows a compositional bias: basic and acidic residues; it reads REARRQQRREEKR. The SH2 domain occupies 1363–1445; it reads NYHNFNYKAA…SDLDELIVNH (83 aa). Positions 1632–1723 are disordered; the sequence is APAAGGPPGR…GGYGGGYRGY (92 aa). The span at 1639-1653 shows a compositional bias: pro residues; it reads PGRPPSMPGAPPMMP. Over residues 1663–1672 the composition is skewed to low complexity; it reads PSYAPPFAGA. Over residues 1675 to 1685 the composition is skewed to pro residues; the sequence is PGPPPARPPVP. Over residues 1709 to 1723 the composition is skewed to gly residues; the sequence is NSGGAGGYGGGYRGY.

The protein belongs to the SPT6 family.

Its subcellular location is the nucleus. It localises to the chromosome. In terms of biological role, histone H3-H4 chaperone that plays a role in maintenance of chromatin structure during RNA polymerase II transcription elongation thereby repressing transcription initiation from cryptic promoters. Mediates the reassembly of nucleosomes onto the promoters of at least a selected set of genes during repression; the nucleosome reassembly is essential for transcriptional repression. Essential for viability. This is Transcription elongation factor SPT6 (SPT6) from Mycosarcoma maydis (Corn smut fungus).